We begin with the raw amino-acid sequence, 623 residues long: Phosphoenolpyruvate carboxykinase [GTP] (623 aa).

Residues Arg-86 and 220 to 222 (YGG) contribute to the substrate site. Residues Lys-229 and His-248 each coordinate Mn(2+). Ser-270 contacts substrate. A GTP-binding site is contributed by 271–276 (MCGKTS). Residue Cys-272 is part of the active site. Mn(2+) is bound at residue Asp-289. 384–386 (NAR) lines the substrate pocket. GTP contacts are provided by Arg-386 and Arg-418.

This sequence belongs to the phosphoenolpyruvate carboxykinase [GTP] family. As to quaternary structure, homotetramer. Mn(2+) serves as cofactor.

The protein localises to the cytoplasm. The catalysed reaction is oxaloacetate + GTP = phosphoenolpyruvate + GDP + CO2. The protein operates within carbohydrate biosynthesis; gluconeogenesis. Functionally, involved in the gluconeogenesis. Catalyzes the conversion of oxaloacetate (OAA) to phosphoenolpyruvate (PEP), the rate-limiting step in the metabolic pathway that produces glucose from lactate and other precursors derived from the citric acid cycle. The polypeptide is Phosphoenolpyruvate carboxykinase [GTP] (pckG) (Thermococcus kodakarensis (strain ATCC BAA-918 / JCM 12380 / KOD1) (Pyrococcus kodakaraensis (strain KOD1))).